The chain runs to 213 residues: MQKSNLYSKLLKSPDDAPVFISEKLELDFISHAYSLGLFPWTSNPVTWWCPSPRMVLFPDEIHIQKSIKKALKTYEIRLDYDFALLIKHCSLRKKTWINQEFIETYTKLFEQNLAHSVEVYENDEFIGGLYGLIIGKVFFGESMISLKKDASKIALIKLCEILKPYDFLIDCQVPNEHLKFMGAKEMIKKDFLKILEKKVSLESGFENFQNLL.

The protein belongs to the L/F-transferase family.

The protein resides in the cytoplasm. It carries out the reaction N-terminal L-lysyl-[protein] + L-leucyl-tRNA(Leu) = N-terminal L-leucyl-L-lysyl-[protein] + tRNA(Leu) + H(+). The enzyme catalyses N-terminal L-arginyl-[protein] + L-leucyl-tRNA(Leu) = N-terminal L-leucyl-L-arginyl-[protein] + tRNA(Leu) + H(+). It catalyses the reaction L-phenylalanyl-tRNA(Phe) + an N-terminal L-alpha-aminoacyl-[protein] = an N-terminal L-phenylalanyl-L-alpha-aminoacyl-[protein] + tRNA(Phe). Functionally, functions in the N-end rule pathway of protein degradation where it conjugates Leu, Phe and, less efficiently, Met from aminoacyl-tRNAs to the N-termini of proteins containing an N-terminal arginine or lysine. This Campylobacter lari (strain RM2100 / D67 / ATCC BAA-1060) protein is Leucyl/phenylalanyl-tRNA--protein transferase.